The primary structure comprises 292 residues: Protease HtpX homolog (292 aa).

A run of 2 helical transmembrane segments spans residues 4 to 24 and 39 to 59; these read ILLFVLTNLAVVLVLGVVASL and GALLGFALVMGFGGAFISLLI. Residue histidine 144 participates in Zn(2+) binding. The active site involves glutamate 145. Residue histidine 148 participates in Zn(2+) binding. Helical transmembrane passes span 159–179 and 199–219; these read LIQGVMNTFVVFLSRVIGYAV and VTTIVLDIALGFVAAIIVAWF. Glutamate 224 serves as a coordination point for Zn(2+).

The protein belongs to the peptidase M48B family. Zn(2+) is required as a cofactor.

The protein resides in the cell inner membrane. The polypeptide is Protease HtpX homolog (Verminephrobacter eiseniae (strain EF01-2)).